The following is a 417-amino-acid chain: MPYYWGAILIGGVFLAGCTQNQETTTTQSGSKENVIKVGLLVDLSGGLATYGNNEKHICEIAEEKINKYFEEKGMPYKVKLYVEDTRADPNICLQKVQALHAQGITFFLGPMASGEVKNIKGFINSNKIVIISPSSTAPPQMLGFRTPEEKKYVFRFVPTDNFQGNAIGDVAKQLGLKNVIVIYRKDAWGDGLERATVEKLKANGINIIDEIPYDPNIGDWSPIIQTTTNKIAGKGNDTGVIFIGYEEVATLLSQIDDNSPLLKHVWIGCDGTANSKKVLEEAKNKAVKVKLYSTMFQSETDEAEKIKEEFKKRGYGEPDQYALNVYDAFWVGAISYAEMLNKTGGKYDADLLSKLIKENTVKYSEGQFGVKSVTGYIKLNEWNDRASGNYGIFAVTEDGWKLVGVWDSTTGKINWK.

An N-terminal signal peptide occupies residues 1–21; it reads MPYYWGAILIGGVFLAGCTQN.

This is an uncharacterized protein from Methanocaldococcus jannaschii (strain ATCC 43067 / DSM 2661 / JAL-1 / JCM 10045 / NBRC 100440) (Methanococcus jannaschii).